Here is a 146-residue protein sequence, read N- to C-terminus: Large ribosomal subunit protein uL15 (146 aa).

Residues methionine 1–phenylalanine 66 are disordered. 2 stretches are compositionally biased toward gly residues: residues glutamine 21–alanine 31 and serine 42–glycine 52.

It belongs to the universal ribosomal protein uL15 family. Part of the 50S ribosomal subunit.

Binds to the 23S rRNA. The chain is Large ribosomal subunit protein uL15 from Pelotomaculum thermopropionicum (strain DSM 13744 / JCM 10971 / SI).